We begin with the raw amino-acid sequence, 411 residues long: Aspartokinase (411 aa).

7 to 10 (KFGG) contributes to the ATP binding site. 25–30 (RVIEEK) serves as a coordination point for substrate. Serine 41 contributes to the ATP binding site. Substrate is bound by residues 47–49 (TDE), glutamate 74, 125–126 (LN), 150–153 (RGGS), and serine 153. ATP is bound by residues 173 to 174 (TD) and 179 to 184 (FTTDPR). ACT domains lie at 264–338 (VTVF…SETG) and 344–411 (IVGS…KSER). Substrate is bound by residues 289-291 (NVD), glutamine 295, 355-356 (VA), 369-370 (QV), and 376-377 (SE).

This sequence belongs to the aspartokinase family. Tetramer consisting of 2 isoforms Alpha (catalytic and regulation) and of a homodimer of 2 isoforms Beta (regulation).

It carries out the reaction L-aspartate + ATP = 4-phospho-L-aspartate + ADP. It participates in amino-acid biosynthesis; L-lysine biosynthesis via DAP pathway; (S)-tetrahydrodipicolinate from L-aspartate: step 1/4. The protein operates within amino-acid biosynthesis; L-methionine biosynthesis via de novo pathway; L-homoserine from L-aspartate: step 1/3. Its pathway is amino-acid biosynthesis; L-threonine biosynthesis; L-threonine from L-aspartate: step 1/5. Its activity is regulated as follows. Lysine-sensitive. Catalyzes the phosphorylation of the beta-carboxyl group of aspartic acid with ATP to yield 4-phospho-L-aspartate, which is involved in the branched biosynthetic pathway leading to the biosynthesis of amino acids threonine, isoleucine and methionine. This Bacillus sp. (strain MGA3) protein is Aspartokinase (lysC).